Here is a 236-residue protein sequence, read N- to C-terminus: Ribosome maturation protein SDO1 homolog (236 aa).

Belongs to the SDO1/SBDS family. In terms of assembly, crystallized in association with 70S ribosomes.

The chain is Ribosome maturation protein SDO1 homolog from Thermococcus kodakarensis (strain ATCC BAA-918 / JCM 12380 / KOD1) (Pyrococcus kodakaraensis (strain KOD1)).